Here is a 159-residue protein sequence, read N- to C-terminus: G-protein-signaling modulator 3 (159 aa).

Residues 1–54 (MEAERPQEEDGEQSLPQDDQGWPPVNATARPWRSAPPSPPPPGTRHTALGPRSG) are disordered. A phosphoserine mark is found at serine 34, serine 38, serine 55, and serine 58. The span at 34-43 (SAPPSPPPPG) shows a compositional bias: pro residues. Threonine 61 carries the phosphothreonine modification. The GoLoco 1 domain occupies 61–83 (TELLLDLVAEAQSRRLEEQRATF). Positions 77-97 (EEQRATFHTPEAPPNLAPAPP) are disordered. Positions 87–97 (EAPPNLAPAPP) are enriched in pro residues. GoLoco domains lie at 103-125 (KEQLYSTILSHQCQRIEAQRSDP) and 131-154 (GQELLELLLRVQGGGRMEEQRSRP).

Its subcellular location is the cytoplasm. Interacts with subunit of G(i) alpha proteins and regulates the activation of G(i) alpha proteins. The chain is G-protein-signaling modulator 3 (Gpsm3) from Mus musculus (Mouse).